Here is a 507-residue protein sequence, read N- to C-terminus: uncharacterized protein (507 aa).

A run of 12 helical transmembrane segments spans residues W46–Y66, A83–A103, A112–L132, F141–L161, I181–V201, V207–F227, I263–M283, V299–V319, T328–L348, V354–G374, T389–M409, and M442–F462. Positions A477–I493 are enriched in basic and acidic residues. Positions A477–K507 are disordered.

It localises to the membrane. This is an uncharacterized protein from Caenorhabditis elegans.